The sequence spans 66 residues: Clarkitoxin-1 (66 aa).

4 disulfides stabilise this stretch: cysteine 3–cysteine 24, cysteine 17–cysteine 42, cysteine 46–cysteine 59, and cysteine 60–cysteine 65.

As to expression, expressed by the venom gland.

Its subcellular location is the secreted. In terms of biological role, not toxic to mice when injected intravenously or intraperitoneally. The protein is Clarkitoxin-1 of Micrurus clarki (Clark's coral snake).